A 498-amino-acid polypeptide reads, in one-letter code: Probable cytosol aminopeptidase (498 aa).

Positions 269 and 274 each coordinate Mn(2+). Residue Lys-281 is part of the active site. Mn(2+) contacts are provided by Asp-292, Asp-351, and Glu-353. Arg-355 is an active-site residue.

It belongs to the peptidase M17 family. The cofactor is Mn(2+).

It localises to the cytoplasm. The enzyme catalyses Release of an N-terminal amino acid, Xaa-|-Yaa-, in which Xaa is preferably Leu, but may be other amino acids including Pro although not Arg or Lys, and Yaa may be Pro. Amino acid amides and methyl esters are also readily hydrolyzed, but rates on arylamides are exceedingly low.. The catalysed reaction is Release of an N-terminal amino acid, preferentially leucine, but not glutamic or aspartic acids.. Presumably involved in the processing and regular turnover of intracellular proteins. Catalyzes the removal of unsubstituted N-terminal amino acids from various peptides. This is Probable cytosol aminopeptidase from Glaesserella parasuis serovar 5 (strain SH0165) (Haemophilus parasuis).